We begin with the raw amino-acid sequence, 469 residues long: 3-isopropylmalate dehydratase large subunit (469 aa).

[4Fe-4S] cluster is bound by residues Cys347, Cys407, and Cys410.

It belongs to the aconitase/IPM isomerase family. LeuC type 1 subfamily. Heterodimer of LeuC and LeuD. [4Fe-4S] cluster serves as cofactor.

The catalysed reaction is (2R,3S)-3-isopropylmalate = (2S)-2-isopropylmalate. It participates in amino-acid biosynthesis; L-leucine biosynthesis; L-leucine from 3-methyl-2-oxobutanoate: step 2/4. Its function is as follows. Catalyzes the isomerization between 2-isopropylmalate and 3-isopropylmalate, via the formation of 2-isopropylmaleate. In Sorangium cellulosum (strain So ce56) (Polyangium cellulosum (strain So ce56)), this protein is 3-isopropylmalate dehydratase large subunit.